The primary structure comprises 202 residues: Ras-related protein Rab-18 (202 aa).

12 residues coordinate GTP: Ser-18, Gly-21, Lys-22, Ser-23, Ser-24, Asp-35, Pro-36, Thr-41, Gly-67, Lys-124, Asp-126, and Ala-153. Residues 38-46 (QAATIGVDF) carry the Effector region motif. S-geranylgeranyl cysteine attachment occurs at residues Cys-198 and Cys-200.

The protein belongs to the small GTPase superfamily. Rab family.

The protein resides in the cell membrane. It catalyses the reaction GTP + H2O = GDP + phosphate + H(+). In terms of biological role, the small GTPases Rab are key regulators of intracellular membrane trafficking, from the formation of transport vesicles to their fusion with membranes. Rabs cycle between an inactive GDP-bound form and an active GTP-bound form that is able to recruit to membranes different sets of downstream effectors directly responsible for vesicle formation, movement, tethering and fusion. This is Ras-related protein Rab-18 (RAB18A) from Lymnaea stagnalis (Great pond snail).